The primary structure comprises 446 residues: Glutamine synthetase (446 aa).

In terms of domain architecture, GS beta-grasp spans 14–107 (NNVKFLRFQF…IICDVYRKNG (94 aa)). Positions 114-446 (PRGCLKRVLA…DWEFNKYVRI (333 aa)) constitute a GS catalytic domain. Mg(2+)-binding residues include glutamate 138 and glutamate 140. Position 187 (glutamate 187) interacts with ATP. Residues glutamate 192 and glutamate 199 each coordinate Mg(2+). L-glutamate-binding positions include 243 to 244 (NG) and glycine 244. Histidine 248 provides a ligand contact to Mg(2+). Serine 252 serves as a coordination point for ATP. The L-glutamate site is built by arginine 301, glutamate 307, and arginine 319. 3 residues coordinate ATP: arginine 319, arginine 324, and lysine 331. Mg(2+) is bound at residue glutamate 336. Arginine 338 contributes to the L-glutamate binding site.

Belongs to the glutamine synthetase family. As to quaternary structure, oligomer of 12 subunits arranged in the form of two hexagons. Requires Mg(2+) as cofactor.

It localises to the cytoplasm. It catalyses the reaction L-glutamate + NH4(+) + ATP = L-glutamine + ADP + phosphate + H(+). Its function is as follows. Probably involved in nitrogen metabolism via ammonium assimilation. Catalyzes the ATP-dependent biosynthesis of glutamine from glutamate and ammonia. The chain is Glutamine synthetase from Methanococcus voltae.